The primary structure comprises 242 residues: ATP synthase subunit a (242 aa).

Helical transmembrane passes span 29–49, 84–104, 114–134, 140–160, 181–201, and 203–223; these read SSIY…LAFY, FIPL…LGMT, IIVT…VGFI, FLTL…MIVI, MAGH…MIYL, and FLPI…AILQ.

The protein belongs to the ATPase A chain family. In terms of assembly, F-type ATPases have 2 components, CF(1) - the catalytic core - and CF(0) - the membrane proton channel. CF(1) has five subunits: alpha(3), beta(3), gamma(1), delta(1), epsilon(1). CF(0) has three main subunits: a(1), b(2) and c(9-12). The alpha and beta chains form an alternating ring which encloses part of the gamma chain. CF(1) is attached to CF(0) by a central stalk formed by the gamma and epsilon chains, while a peripheral stalk is formed by the delta and b chains.

It localises to the cell inner membrane. Functionally, key component of the proton channel; it plays a direct role in the translocation of protons across the membrane. In Rickettsia typhi (strain ATCC VR-144 / Wilmington), this protein is ATP synthase subunit a.